A 203-amino-acid polypeptide reads, in one-letter code: ATP phosphoribosyltransferase (203 aa).

The protein belongs to the ATP phosphoribosyltransferase family. Short subfamily. Heteromultimer composed of HisG and HisZ subunits.

It is found in the cytoplasm. The catalysed reaction is 1-(5-phospho-beta-D-ribosyl)-ATP + diphosphate = 5-phospho-alpha-D-ribose 1-diphosphate + ATP. It participates in amino-acid biosynthesis; L-histidine biosynthesis; L-histidine from 5-phospho-alpha-D-ribose 1-diphosphate: step 1/9. Functionally, catalyzes the condensation of ATP and 5-phosphoribose 1-diphosphate to form N'-(5'-phosphoribosyl)-ATP (PR-ATP). Has a crucial role in the pathway because the rate of histidine biosynthesis seems to be controlled primarily by regulation of HisG enzymatic activity. This Campylobacter fetus subsp. fetus (strain 82-40) protein is ATP phosphoribosyltransferase.